Reading from the N-terminus, the 167-residue chain is Insertion element IS1 protein InsB (167 aa).

Belongs to the transposase 27 family.

In terms of biological role, absolutely required for transposition of IS1. This Escherichia coli protein is Insertion element IS1 protein InsB (insB).